A 396-amino-acid polypeptide reads, in one-letter code: Ribosomal RNA large subunit methyltransferase I (396 aa).

Residues 2 to 81 (TVRLILAKGR…EVIDCAFFIR (80 aa)) enclose the PUA domain.

It belongs to the methyltransferase superfamily. RlmI family.

It localises to the cytoplasm. The enzyme catalyses cytidine(1962) in 23S rRNA + S-adenosyl-L-methionine = 5-methylcytidine(1962) in 23S rRNA + S-adenosyl-L-homocysteine + H(+). Its function is as follows. Specifically methylates the cytosine at position 1962 (m5C1962) of 23S rRNA. The chain is Ribosomal RNA large subunit methyltransferase I from Yersinia pseudotuberculosis serotype O:1b (strain IP 31758).